Reading from the N-terminus, the 475-residue chain is Ribulose bisphosphate carboxylase large chain (475 aa).

Positions 1–2 (MS) are excised as a propeptide. P3 is subject to N-acetylproline. K14 bears the N6,N6,N6-trimethyllysine mark. Residues N123 and T173 each contribute to the substrate site. K175 acts as the Proton acceptor in catalysis. Position 177 (K177) interacts with substrate. Mg(2+) is bound by residues K201, D203, and E204. An N6-carboxylysine modification is found at K201. The active-site Proton acceptor is H294. 3 residues coordinate substrate: R295, H327, and S379.

This sequence belongs to the RuBisCO large chain family. Type I subfamily. Heterohexadecamer of 8 large chains and 8 small chains; disulfide-linked. The disulfide link is formed within the large subunit homodimers. Mg(2+) serves as cofactor. Post-translationally, the disulfide bond which can form in the large chain dimeric partners within the hexadecamer appears to be associated with oxidative stress and protein turnover.

It localises to the plastid. The protein resides in the chloroplast. The catalysed reaction is 2 (2R)-3-phosphoglycerate + 2 H(+) = D-ribulose 1,5-bisphosphate + CO2 + H2O. The enzyme catalyses D-ribulose 1,5-bisphosphate + O2 = 2-phosphoglycolate + (2R)-3-phosphoglycerate + 2 H(+). Functionally, ruBisCO catalyzes two reactions: the carboxylation of D-ribulose 1,5-bisphosphate, the primary event in carbon dioxide fixation, as well as the oxidative fragmentation of the pentose substrate in the photorespiration process. Both reactions occur simultaneously and in competition at the same active site. This is Ribulose bisphosphate carboxylase large chain from Mesostigma viride (Green alga).